We begin with the raw amino-acid sequence, 430 residues long: Functional amyloid transporter FapF (430 aa).

A signal peptide spans 1 to 24 (MHRSLSLRAVVCLSTLLPASLLYA). At 25-131 (APDVDIETLK…EASGFFGNGK (107 aa)) the chain is on the periplasmic side. Residues 29-64 (DIETLKQELLELKQRYEAQQKALAVLEQRVRQVEDQ) are a coiled coil. Residues 62 to 114 (EDQPATPAPKRLAKSPADFKQSGSTVAASSGTGGATGGSSYGQSLKDDSEPAQ) are disordered. The segment covering 92 to 101 (GTGGATGGSS) has biased composition (gly residues). The segment at 113 to 125 (AQSVSNLYNEASG) is alpha helical plug. A beta stranded transmembrane segment spans residues 132–142 (FSFETGITYAR). The Extracellular segment spans residues 143 to 172 (YDARQLTLNGFLALDSIFLGNINLDRIKAD). The chain crosses the membrane as a beta stranded span at residues 173 to 183 (NWTLDLTGRYN). Topologically, residues 184–189 (LDNRWQ) are periplasmic. The chain crosses the membrane as a beta stranded span at residues 190–198 (FDVNVPVVY). Residues 199–224 (RESTYQSGGASGGDPQATSEESVSRD) lie on the Extracellular side of the membrane. The tract at residues 203–223 (YQSGGASGGDPQATSEESVSR) is disordered. The beta stranded transmembrane segment at 225–238 (PTIGDVNFGIAYKF) threads the bilayer. The Periplasmic segment spans residues 239–246 (LDESATMP). A beta stranded transmembrane segment spans residues 247 to 256 (DAVVSVRVKA). Topologically, residues 257–288 (PTGKEPFGIKLVRSTANDNLYVPESLPTGNGV) are extracellular. Residues 289-298 (WSITPGLSLV) form a beta stranded membrane-spanning segment. Topologically, residues 299–304 (KTFDPA) are periplasmic. The beta stranded transmembrane segment at 305–314 (VLFGSVSYTH) threads the bilayer. Residues 315-339 (NLEDSFDDISSDVNQKVGGKVRLGD) lie on the Extracellular side of the membrane. A beta stranded transmembrane segment spans residues 340 to 348 (SFQFGVGVA). Residues 349 to 356 (FALNERMS) are Periplasmic-facing. The chain crosses the membrane as a beta stranded span at residues 357–365 (MSFSVSDLI). Over 366-386 (QRKSKLKPDGGGWQSIVSSDA) the chain is Extracellular. The chain crosses the membrane as a beta stranded span at residues 387 to 397 (NAGYFNVGMTI). Residues 398–404 (AASENLT) are Periplasmic-facing. Residues 405–412 (IVPNLAIG) form a beta stranded membrane-spanning segment. Over 413–419 (MTDDAPD) the chain is Extracellular. A beta stranded transmembrane segment spans residues 420–428 (FTFSLKFPY). Topologically, residues 429 to 430 (YF) are periplasmic.

Belongs to the amyloid transporter (TC 9.B.153) family. In terms of assembly, homotrimer.

The protein localises to the cell outer membrane. Functionally, transports fibril components across the outer membrane. Upon overexpression of the endogenous six-gene locus (fapA-fapF) in situ cells form large clumps during liquid growth, make large amounts of biofilm and produce amyloid fibrils. Expression of the 6 gene operon in E.coli strain BL21(DE3) induces flocculation and biofilm formation with copious extracellular fibrils. The protein is Functional amyloid transporter FapF of Pseudomonas fluorescens.